The following is a 1853-amino-acid chain: DNA-directed RNA polymerase II subunit RPB1 (1853 aa).

Residues cysteine 66, cysteine 69, cysteine 76, histidine 79, cysteine 106, cysteine 109, cysteine 149, and cysteine 177 each contribute to the Zn(2+) site. Positions 256-268 (PAVVTFGSAKNQD) are lid loop. The segment at 314 to 331 (NCIPGLPTATQKGGRPLK) is rudder loop. Positions 489, 491, and 493 each coordinate Mg(2+). The interval 827-839 (PSEFFFHAMGGRE) is bridging helix. A Glycyl lysine isopeptide (Lys-Gly) (interchain with G-Cter in ubiquitin) cross-link involves residue lysine 1260. 2 disordered regions span residues 1520–1568 (PWSP…PRTP) and 1589–1853 (SPHY…DPQN). Low complexity-rich tracts occupy residues 1589-1811 (SPHY…TPSP) and 1821-1853 (YSPS…DPQN). 26 tandem repeats follow at residues 1592-1598 (YSPTSPS), 1599-1605 (YSPTSPA), 1616-1622 (YSPTSPS), 1623-1629 (YSPTSPS), 1630-1636 (YSPTSPS), 1637-1643 (YSPTSPS), 1644-1650 (YSPTSPS), 1651-1657 (YSPTSPS), 1658-1664 (YSPTSPS), 1665-1671 (YSPTSPS), 1679-1685 (YSPTSPT), 1686-1692 (YSPTSPT), 1693-1699 (YSPTSPT), 1700-1706 (YSPTSPT), 1707-1713 (YSPTSPS), 1717-1723 (YSPSSPK), 1724-1730 (YSPSSPT), 1731-1737 (YSPTSPS), 1752-1758 (YSPSSPT), 1759-1765 (YTPSSPT), 1779-1785 (YSPTSPT), 1786-1792 (YSPTSPS), 1800-1806 (YSPTSPT), 1821-1827 (YSPSSPT), 1828-1834 (YSPSSPT), and 1842-1848 (YSPSSPT). Residues 1592–1848 (YSPTSPSYSP…SPSYSPSSPT (257 aa)) are C-terminal domain (CTD); 26 X 7 AA approximate tandem repeats of Y-[ST]-P-[ST]-S-P-[AGKNQRST].

This sequence belongs to the RNA polymerase beta' chain family. As to quaternary structure, component of the RNA polymerase II (Pol II) complex consisting of 12 subunits. Interacts with sig-7. Post-translationally, the tandem 7 residues repeats in the C-terminal domain (CTD) can be highly phosphorylated. The phosphorylation activates Pol II. Phosphorylation occurs mainly at residues 'Ser-2' and 'Ser-5' of the heptapeptide repeat and starts at the 3- to 4-cell embryonic stage. This phosphorylation also occurs in the early stages of oocyte development and is not detected in oocytes arrested at the meiotic diakinesis stage. In the somatic lineage, phosphorylation at 'Ser-2' is mediated by cdk-12 downstream of cdk-9 whereas in the germline lineage cdk-12 phosphorylates 'Ser-2' independently of cdk-9. Phosphorylation is likely mediated by cdk-7. May be dephosphorylated by fcp-1 in diakinetic oocytes and in 1-cell and 2-cell embryos. Dephosphorylated at 'Ser-5' of the heptapeptide repeat by ssup-72. The phosphorylation state is believed to result from the balanced action of site-specific CTD kinases and phosphatase, and a 'CTD code' that specifies the position of Pol II within the transcription cycle has been proposed. Following transcription stress, the elongating form of RNA polymerase II (RNA pol IIo) is polyubiquitinated via 'Lys-63'-linkages on Lys-1260 at DNA damage sites without leading to degradation: ubiquitination promotes RNA pol IIo backtracking to allow access by the transcription-coupled nucleotide excision repair (TC-NER) machinery. Subsequent DEF1-dependent polyubiquitination by the elongin complex via 'Lys-48'-linkages may lead to proteasome-mediated degradation; presumably at stalled RNA pol II where TC-NER has failed, to halt global transcription and enable 'last resort' DNA repair pathways.

The protein resides in the nucleus. It is found in the chromosome. It catalyses the reaction RNA(n) + a ribonucleoside 5'-triphosphate = RNA(n+1) + diphosphate. DNA-dependent RNA polymerase catalyzes the transcription of DNA into RNA using the four ribonucleoside triphosphates as substrates. Largest and catalytic component of RNA polymerase II which synthesizes mRNA precursors and many functional non-coding RNAs. Forms the polymerase active center together with the second largest subunit. Pol II is the central component of the basal RNA polymerase II transcription machinery. It is composed of mobile elements that move relative to each other. RPB1 is part of the core element with the central large cleft, the clamp element that moves to open and close the cleft and the jaws that are thought to grab the incoming DNA template. At the start of transcription, a single-stranded DNA template strand of the promoter is positioned within the central active site cleft of Pol II. A bridging helix emanates from RPB1 and crosses the cleft near the catalytic site and is thought to promote translocation of Pol II by acting as a ratchet that moves the RNA-DNA hybrid through the active site by switching from straight to bent conformations at each step of nucleotide addition. During transcription elongation, Pol II moves on the template as the transcript elongates. Elongation is influenced by the phosphorylation status of the C-terminal domain (CTD) of Pol II largest subunit (RPB1), which serves as a platform for assembly of factors that regulate transcription initiation, elongation, termination and mRNA processing. Involved in the transcription of several genes including those involved in embryogenesis. The sequence is that of DNA-directed RNA polymerase II subunit RPB1 from Caenorhabditis briggsae.